We begin with the raw amino-acid sequence, 254 residues long: MSFTVIIPARFASSRLPGKPLADIKGKPMIQHVFEKALQSGASRVIIATDNENVADVAKSFGAEVCMTSVNHNSGTERLAEVVEKLAIPDNEIIVNIQGDEPLIPPVIVRQVADNLAKFNVNMASLAVKIHDAEELFNPNAVKVLTDKDGYVLYFSRSVIPYDRDQFMNLQDVQKVQLSDAYLRHIGIYAYRAGFIKQYVQWAPTQLENLEKLEQLRVLYNGERIHVELAKEVPAVGVDTAEDLEKVRAILAAN.

The protein belongs to the KdsB family.

It is found in the cytoplasm. It carries out the reaction 3-deoxy-alpha-D-manno-oct-2-ulosonate + CTP = CMP-3-deoxy-beta-D-manno-octulosonate + diphosphate. The protein operates within nucleotide-sugar biosynthesis; CMP-3-deoxy-D-manno-octulosonate biosynthesis; CMP-3-deoxy-D-manno-octulosonate from 3-deoxy-D-manno-octulosonate and CTP: step 1/1. It participates in bacterial outer membrane biogenesis; lipopolysaccharide biosynthesis. Its function is as follows. Activates KDO (a required 8-carbon sugar) for incorporation into bacterial lipopolysaccharide in Gram-negative bacteria. This Haemophilus influenzae (strain ATCC 51907 / DSM 11121 / KW20 / Rd) protein is 3-deoxy-manno-octulosonate cytidylyltransferase.